A 1237-amino-acid polypeptide reads, in one-letter code: uncharacterized protein (1237 aa).

Residues 591 to 712 (KDMLEIYSDL…IVLSKYTQWT (122 aa)) form the MHD1 domain. A C2 domain is found at 786 to 906 (LIEALDVAES…GDYLPREEWF (121 aa)). The 117-residue stretch at 1014–1130 (EAAIYELLDY…KPTDFLLQEC (117 aa)) folds into the MHD2 domain.

This is an uncharacterized protein from Schizosaccharomyces pombe (strain 972 / ATCC 24843) (Fission yeast).